Here is a 288-residue protein sequence, read N- to C-terminus: Protein PGR (288 aa).

7 consecutive transmembrane segments (helical) span residues 1-21, 29-49, 91-111, 123-143, 177-197, 210-230, and 268-288; these read METSPQFRLIFAVIISSLIAF, LDLSGGIAGFLVMTIHFTAGF, VLCNSGIASVLVVIACTLTGW, IVTALIGGIIGHYACCNGDTW, LLAALAAGTTVGLTFLIFGLF, LLVIPLSALAGLCGSLIDSIL, and VNFVSILLTSFLTSIASVYIF.

The protein belongs to the TMEM19 family. Expressed in the vasculature of leaves, roots, inflorescences, siliques, anther filaments and sepals. Detected primarily in the phloem tissues, including in the root ans shoot apical meristems.

The protein resides in the cell membrane. Functionally, involved in the glucose-triggered developmental leaf growth process. The protein is Protein PGR of Arabidopsis thaliana (Mouse-ear cress).